The following is a 100-amino-acid chain: NAD(P)H-quinone oxidoreductase subunit 4L, chloroplastic (100 aa).

Helical transmembrane passes span 1–21, 29–49, and 63–83; these read MFGHALLLGAFPFCIGIYGLI, ALMCLELIFNAVNVNFVTFPN, and VFVIAVAAAEAAIGSAIVLAI.

It belongs to the complex I subunit 4L family. NDH is composed of at least 16 different subunits, 5 of which are encoded in the nucleus.

It is found in the plastid. Its subcellular location is the chloroplast thylakoid membrane. It catalyses the reaction a plastoquinone + NADH + (n+1) H(+)(in) = a plastoquinol + NAD(+) + n H(+)(out). It carries out the reaction a plastoquinone + NADPH + (n+1) H(+)(in) = a plastoquinol + NADP(+) + n H(+)(out). In terms of biological role, NDH shuttles electrons from NAD(P)H:plastoquinone, via FMN and iron-sulfur (Fe-S) centers, to quinones in the photosynthetic chain and possibly in a chloroplast respiratory chain. The immediate electron acceptor for the enzyme in this species is believed to be plastoquinone. Couples the redox reaction to proton translocation, and thus conserves the redox energy in a proton gradient. The protein is NAD(P)H-quinone oxidoreductase subunit 4L, chloroplastic of Huperzia lucidula (Shining clubmoss).